A 200-amino-acid chain; its full sequence is Large ribosomal subunit protein bL25 (200 aa).

The protein belongs to the bacterial ribosomal protein bL25 family. CTC subfamily. Part of the 50S ribosomal subunit; part of the 5S rRNA/L5/L18/L25 subcomplex. Contacts the 5S rRNA. Binds to the 5S rRNA independently of L5 and L18.

In terms of biological role, this is one of the proteins that binds to the 5S RNA in the ribosome where it forms part of the central protuberance. The sequence is that of Large ribosomal subunit protein bL25 from Leifsonia xyli subsp. xyli (strain CTCB07).